We begin with the raw amino-acid sequence, 451 residues long: Probable tyrosyl-DNA phosphodiesterase (451 aa).

The interval 1 to 34 (MKRTIQETPGPSSTTVPPPKKLNSQRNGSNLEPG) is disordered. Positions 22–32 (LNSQRNGSNLE) are enriched in polar residues. His131 acts as the Nucleophile in catalysis. Lys133 provides a ligand contact to substrate. The interaction with DNA stretch occupies residues 266-269 (SIGS). The Proton donor/acceptor role is filled by His356. Lys358 contacts substrate.

Belongs to the tyrosyl-DNA phosphodiesterase family.

Its subcellular location is the nucleus. In terms of biological role, DNA repair enzyme that can remove a variety of covalent adducts from DNA through hydrolysis of a 3'-phosphodiester bond, giving rise to DNA with a free 3' phosphate. Catalyzes the hydrolysis of dead-end complexes between DNA and the topoisomerase I active site tyrosine residue. Hydrolyzes 3'-phosphoglycolates on protruding 3' ends on DNA double-strand breaks due to DNA damage by radiation and free radicals. Acts on blunt-ended double-strand DNA breaks and on single-stranded DNA. May have low 3'exonuclease activity and may be able to remove a single nucleoside from the 3'end of DNA and RNA molecules with 3'hydroxyl groups. Has no exonuclease activity towards DNA or RNA with a 3'phosphate. The sequence is that of Probable tyrosyl-DNA phosphodiesterase from Caenorhabditis elegans.